A 130-amino-acid chain; its full sequence is Small ribosomal subunit protein uS9 (130 aa).

The protein belongs to the universal ribosomal protein uS9 family.

The protein is Small ribosomal subunit protein uS9 of Verminephrobacter eiseniae (strain EF01-2).